Consider the following 55-residue polypeptide: Large ribosomal subunit protein bL33 (55 aa).

It belongs to the bacterial ribosomal protein bL33 family.

The protein is Large ribosomal subunit protein bL33 of Caulobacter vibrioides (strain ATCC 19089 / CIP 103742 / CB 15) (Caulobacter crescentus).